The sequence spans 277 residues: Bis(5'-nucleosyl)-tetraphosphatase, symmetrical (277 aa).

It belongs to the Ap4A hydrolase family.

The enzyme catalyses P(1),P(4)-bis(5'-adenosyl) tetraphosphate + H2O = 2 ADP + 2 H(+). Functionally, hydrolyzes diadenosine 5',5'''-P1,P4-tetraphosphate to yield ADP. The polypeptide is Bis(5'-nucleosyl)-tetraphosphatase, symmetrical (Bordetella pertussis (strain Tohama I / ATCC BAA-589 / NCTC 13251)).